We begin with the raw amino-acid sequence, 193 residues long: uncharacterized protein (193 aa).

Disordered regions lie at residues 1 to 21, 53 to 96, and 114 to 136; these read MPKG…APPL, GAPA…PWPS, and SGPE…ASAS. A compositionally biased stretch (low complexity) spans 53-70; sequence GAPAGGAPAAGGRSLPQG. A compositionally biased stretch (pro residues) spans 71-95; it reads PSAPAPPPPPGLGPPSERPCPPPWP. Low complexity predominate over residues 116–127; sequence PEAAASPLAPGP.

This is an uncharacterized protein from Bos taurus (Bovine).